Reading from the N-terminus, the 602-residue chain is Aspartate--tRNA(Asp/Asn) ligase (602 aa).

Glu-175 is a binding site for L-aspartate. The tract at residues 199–202 is aspartate; that stretch reads QIFK. Position 221 (Arg-221) interacts with L-aspartate. ATP-binding positions include 221–223 and Gln-230; that span reads RDE. His-458 provides a ligand contact to L-aspartate. Glu-492 lines the ATP pocket. Residue Arg-499 participates in L-aspartate binding. 544-547 provides a ligand contact to ATP; the sequence is GLDR.

This sequence belongs to the class-II aminoacyl-tRNA synthetase family. Type 1 subfamily. In terms of assembly, homodimer.

It is found in the cytoplasm. The enzyme catalyses tRNA(Asx) + L-aspartate + ATP = L-aspartyl-tRNA(Asx) + AMP + diphosphate. Aspartyl-tRNA synthetase with relaxed tRNA specificity since it is able to aspartylate not only its cognate tRNA(Asp) but also tRNA(Asn). Reaction proceeds in two steps: L-aspartate is first activated by ATP to form Asp-AMP and then transferred to the acceptor end of tRNA(Asp/Asn). This Cupriavidus metallidurans (strain ATCC 43123 / DSM 2839 / NBRC 102507 / CH34) (Ralstonia metallidurans) protein is Aspartate--tRNA(Asp/Asn) ligase.